Consider the following 178-residue polypeptide: Large ribosomal subunit protein bL25 (178 aa).

This sequence belongs to the bacterial ribosomal protein bL25 family. CTC subfamily. Part of the 50S ribosomal subunit; part of the 5S rRNA/L5/L18/L25 subcomplex. Contacts the 5S rRNA. Binds to the 5S rRNA independently of L5 and L18.

Its function is as follows. This is one of the proteins that binds to the 5S RNA in the ribosome where it forms part of the central protuberance. This chain is Large ribosomal subunit protein bL25, found in Nitratiruptor sp. (strain SB155-2).